A 132-amino-acid polypeptide reads, in one-letter code: Phosphoribosyl-AMP cyclohydrolase (132 aa).

Mg(2+) is bound at residue Asp89. Cys90 provides a ligand contact to Zn(2+). Residues Asp91 and Asp93 each contribute to the Mg(2+) site. Zn(2+)-binding residues include Cys106 and Cys113.

Belongs to the PRA-CH family. In terms of assembly, homodimer. Mg(2+) is required as a cofactor. Zn(2+) serves as cofactor.

It is found in the cytoplasm. It catalyses the reaction 1-(5-phospho-beta-D-ribosyl)-5'-AMP + H2O = 1-(5-phospho-beta-D-ribosyl)-5-[(5-phospho-beta-D-ribosylamino)methylideneamino]imidazole-4-carboxamide. The protein operates within amino-acid biosynthesis; L-histidine biosynthesis; L-histidine from 5-phospho-alpha-D-ribose 1-diphosphate: step 3/9. Catalyzes the hydrolysis of the adenine ring of phosphoribosyl-AMP. The sequence is that of Phosphoribosyl-AMP cyclohydrolase from Renibacterium salmoninarum (strain ATCC 33209 / DSM 20767 / JCM 11484 / NBRC 15589 / NCIMB 2235).